The chain runs to 186 residues: MSTEFEQAVAALHGEGVIAYATEAVFGLGCDPDSELAVQRLLAIKQRPVEKGLILIAADLVQLQDYIDLSQLSGEQLARVEASWPGPFTWIMPARATTPTWLTGQFDTLAVRVTAHPQVQALCRAFGKPLVSTSANLTGEEPARRVTDIGELLASKLAYILPGEVGGQANPSEIKDARTGAVIRPS.

Residues S2 to S186 form the YrdC-like domain.

The protein belongs to the SUA5 family. TsaC subfamily.

It is found in the cytoplasm. It catalyses the reaction L-threonine + hydrogencarbonate + ATP = L-threonylcarbamoyladenylate + diphosphate + H2O. Required for the formation of a threonylcarbamoyl group on adenosine at position 37 (t(6)A37) in tRNAs that read codons beginning with adenine. Catalyzes the conversion of L-threonine, HCO(3)(-)/CO(2) and ATP to give threonylcarbamoyl-AMP (TC-AMP) as the acyladenylate intermediate, with the release of diphosphate. This Aeromonas salmonicida (strain A449) protein is Threonylcarbamoyl-AMP synthase.